The chain runs to 504 residues: L-amino-acid oxidase (504 aa).

The first 18 residues, 1 to 18, serve as a signal peptide directing secretion; sequence MNVFFMFSLLFLAALGSC. A disulfide bridge links C28 with C191. Residues 61 to 62, 81 to 82, R89, and 105 to 108 contribute to the FAD site; these read MS, EA, and GPMR. R108 is a substrate binding site. N190 carries N-linked (GlcNAc...) asparagine glycosylation. H241 is a binding site for substrate. V279 serves as a coordination point for FAD. Residues C349 and C430 are joined by a disulfide bond. N379 carries an N-linked (GlcNAc...) asparagine glycan. Residue Y390 coordinates substrate. FAD contacts are provided by residues E475 and 482-487; that span reads GWIDST. Residue 482-483 coordinates substrate; the sequence is GW.

The protein belongs to the flavin monoamine oxidase family. FIG1 subfamily. Homodimer; non-covalently linked. FAD serves as cofactor. As to expression, expressed by the venom gland.

The protein resides in the secreted. It catalyses the reaction an L-alpha-amino acid + O2 + H2O = a 2-oxocarboxylate + H2O2 + NH4(+). The enzyme catalyses L-leucine + O2 + H2O = 4-methyl-2-oxopentanoate + H2O2 + NH4(+). Catalyzes an oxidative deamination of predominantly hydrophobic and aromatic L-amino acids, thus producing hydrogen peroxide that may contribute to the diverse toxic effects of this enzyme. Shows activity on L-Leu. Exhibits diverse biological activities, such as hemorrhage, hemolysis, edema, antibacterial and antiparasitic activities, as well as regulation of platelet aggregation. Its effect on platelets is controversial, since it either induces aggregation or inhibits agonist-induced aggregation. These different effects are probably due to different experimental conditions. This protein induces apoptosis of cultured HeLa cells. The polypeptide is L-amino-acid oxidase (Gloydius halys (Chinese water mocassin)).